Reading from the N-terminus, the 339-residue chain is Protein RecA (339 aa).

66–73 (GPESSGKT) contributes to the ATP binding site.

It belongs to the RecA family.

The protein localises to the cytoplasm. Functionally, can catalyze the hydrolysis of ATP in the presence of single-stranded DNA, the ATP-dependent uptake of single-stranded DNA by duplex DNA, and the ATP-dependent hybridization of homologous single-stranded DNAs. It interacts with LexA causing its activation and leading to its autocatalytic cleavage. This Geobacter metallireducens (strain ATCC 53774 / DSM 7210 / GS-15) protein is Protein RecA.